Here is a 122-residue protein sequence, read N- to C-terminus: Histone H2B.1 (122 aa).

Low complexity predominate over residues 1 to 10 (MAPKKAPAAA). The tract at residues 1–28 (MAPKKAPAAAAEKKVKKAPTTEKKNKKK) is disordered. Position 2 is a n,N,N-trimethylalanine (A2). An N6-acetyllysine mark is found at K5 and K42. Residue K116 forms a Glycyl lysine isopeptide (Lys-Gly) (interchain with G-Cter in ubiquitin) linkage.

The protein belongs to the histone H2B family. As to quaternary structure, the nucleosome is a histone octamer containing two molecules each of H2A, H2B, H3 and H4 assembled in one H3-H4 heterotetramer and two H2A-H2B heterodimers. The octamer wraps approximately 147 bp of DNA. In terms of processing, acetylation occurs almost exclusively in the MAC. Post-translationally, monoubiquitination to form H2BK115ub1 gives a specific tag for epigenetic transcriptional activation and is also prerequisite for H3K4me and H3K79me formation.

It is found in the nucleus. Its subcellular location is the chromosome. Its function is as follows. Core component of nucleosome. Nucleosomes wrap and compact DNA into chromatin, limiting DNA accessibility to the cellular machineries which require DNA as a template. Histones thereby play a central role in transcription regulation, DNA repair, DNA replication and chromosomal stability. DNA accessibility is regulated via a complex set of post-translational modifications of histones, also called histone code, and nucleosome remodeling. The sequence is that of Histone H2B.1 (HTB1) from Tetrahymena thermophila (strain SB210).